A 209-amino-acid polypeptide reads, in one-letter code: Auxin-binding protein ABP19b (209 aa).

Residues 1-18 (MIFPIFFTFFLLLSTSHA) form the signal peptide. Cysteine 24 and cysteine 39 are joined by a disulfide. A Cupin type-1 domain is found at 53 to 199 (SGLGIAGNTT…TTLLDAPQIK (147 aa)). Asparagine 60 is a glycosylation site (N-linked (GlcNAc...) asparagine). 4 residues coordinate Mn(2+): histidine 101, histidine 103, glutamate 108, and histidine 147.

This sequence belongs to the germin family. As to quaternary structure, interacts with ABP20.

The protein resides in the secreted. It is found in the extracellular space. Its subcellular location is the apoplast. It localises to the cell wall. Functionally, probable receptor for the plant growth-promoting hormone auxin. The sequence is that of Auxin-binding protein ABP19b (ABP19B) from Prunus persica (Peach).